Reading from the N-terminus, the 925-residue chain is Ubp5-interacting protein ftp105 (925 aa).

Over residues 650 to 664 (EGSSDFESKSSDNTS) the composition is skewed to low complexity. The interval 650 to 671 (EGSSDFESKSSDNTSLDGTPLQ) is disordered.

It belongs to the hid-1 family. In terms of assembly, interacts with ubp5.

The protein resides in the cytoplasm. It is found in the golgi apparatus. Required for the localization of ubp5 to the Golgi apparatus. Involved in detoxification of cadmium ion. This chain is Ubp5-interacting protein ftp105 (ftp105), found in Schizosaccharomyces pombe (strain 972 / ATCC 24843) (Fission yeast).